Consider the following 488-residue polypeptide: Cobyric acid synthase (488 aa).

The GATase cobBQ-type domain maps to 248 to 441 (VLRVVVPALP…VHGLFDAPDA (194 aa)). The active-site Nucleophile is Cys328. Residue His433 is part of the active site.

It belongs to the CobB/CobQ family. CobQ subfamily.

Its pathway is cofactor biosynthesis; adenosylcobalamin biosynthesis. Functionally, catalyzes amidations at positions B, D, E, and G on adenosylcobyrinic A,C-diamide. NH(2) groups are provided by glutamine, and one molecule of ATP is hydrogenolyzed for each amidation. This Burkholderia ambifaria (strain ATCC BAA-244 / DSM 16087 / CCUG 44356 / LMG 19182 / AMMD) (Burkholderia cepacia (strain AMMD)) protein is Cobyric acid synthase.